Consider the following 364-residue polypeptide: Isopentenyl-diphosphate delta-isomerase (364 aa).

Over residues 1 to 13 (MSSAQRKDDHVRL) the composition is skewed to basic and acidic residues. Positions 1–24 (MSSAQRKDDHVRLATEQQRAHSGR) are disordered. 6 to 7 (RK) is a substrate binding site. FMN contacts are provided by residues 64 to 66 (AMT), Ser-94, and Asn-123. 94–96 (SMH) contributes to the substrate binding site. Gln-153 lines the substrate pocket. Glu-154 serves as a coordination point for Mg(2+). Residues Lys-185, Ser-210, Thr-215, 259-261 (GIR), and 280-281 (SG) contribute to the FMN site.

This sequence belongs to the IPP isomerase type 2 family. In terms of assembly, homooctamer. Dimer of tetramers. Requires FMN as cofactor. It depends on NADPH as a cofactor. The cofactor is Mg(2+).

It is found in the cytoplasm. It catalyses the reaction isopentenyl diphosphate = dimethylallyl diphosphate. Its function is as follows. Involved in the biosynthesis of isoprenoids. Catalyzes the 1,3-allylic rearrangement of the homoallylic substrate isopentenyl (IPP) to its allylic isomer, dimethylallyl diphosphate (DMAPP). This Kitasatospora griseola (Streptomyces griseolosporeus) protein is Isopentenyl-diphosphate delta-isomerase.